The sequence spans 1075 residues: Flocculation protein FLO5 (1075 aa).

Positions 1-24 are cleaved as a signal peptide; it reads MTIAHHCIFLVILAFLALINVASG. Residues 74–249 form the PA14 domain; that stretch reads GGQTDISIDY…GTTVSDNFEG (176 aa). 4 N-linked (GlcNAc...) asparagine glycosylation sites follow: N135, N187, N203, and N262. The segment at 197–240 is sugar recognition; it reads DGSLPDNITGTVYMYAGYYYPLKVVYSNAVSWGTLPISVELPDG. 8 consecutive repeat copies span residues 278–322, 323–367, 368–412, 413–457, 458–502, 503–547, 548–592, and 593–637. Positions 278 to 637 are 8 X 45 AA approximate tandem repeats, Thr-rich; it reads TTTEPWTGTF…RTPTTAISSS (360 aa). Low complexity-rich tracts occupy residues 322–345, 367–390, 457–480, and 547–570; these read TTTTEPWTGTFTSTSTEMTTVTGT. Disordered stretches follow at residues 322–349, 366–394, 456–484, and 546–574; these read TTTTEPWTGTFTSTSTEMTTVTGTNGQP and ITTTTEPWTGTFTSTSTEMTTVTGTNGQP. A glycan (N-linked (GlcNAc...) asparagine) is linked at N663. Tandem repeats lie at residues 667 to 686 and 687 to 706. The interval 667–706 is 2 X 20 AA approximate tandem repeats, Ser-rich; it reads VISSSVISSSVTSSLVTSSSFISSSVISSSTTTSTSIFSE. The span at 702 to 762 shows a compositional bias: low complexity; that stretch reads SIFSESSTSS…SLPPVTSATT (61 aa). The segment at 702-781 is disordered; the sequence is SIFSESSTSS…PATTTKTSEQ (80 aa). N749 carries N-linked (GlcNAc...) asparagine glycosylation. Residues 763–781 show a composition bias toward polar residues; that stretch reads GQETASSLPPATTTKTSEQ. A run of 3 repeats spans residues 775-825, 847-897, and 898-948. Residues 775 to 948 are 3 X 51 AA approximate repeats, Ser/Thr-rich; it reads TTKTSEQTTL…TVYPTWRPQT (174 aa). Over residues 948–958 the composition is skewed to polar residues; sequence TTNEQSVSSKM. Disordered stretches follow at residues 948 to 980 and 1016 to 1038; these read TTNEQSVSSKMNSATSETTTNTGAAETKTAVTS and SLTSSGLSTMSQQPRSTPASSMV. Low complexity-rich tracts occupy residues 959–977 and 1016–1026; these read NSATSETTTNTGAAETKTA and SLTSSGLSTMS. Residues 1027–1038 show a composition bias toward polar residues; the sequence is QQPRSTPASSMV. A lipid anchor (GPI-anchor amidated glycine) is attached at G1052. A propeptide spans 1053-1075 (removed in mature form); the sequence is SANSLLAGSGLSVFIASLLLAII.

Belongs to the flocculin family. Post-translationally, extensively O-glycosylated. In terms of processing, the GPI-anchor is attached to the protein in the endoplasmic reticulum and serves to target the protein to the cell surface. There, the glucosamine-inositol phospholipid moiety is cleaved off and the GPI-modified mannoprotein is covalently attached via its lipidless GPI glycan remnant to the 1,6-beta-glucan of the outer cell wall layer.

The protein resides in the secreted. Its subcellular location is the cell wall. The protein localises to the membrane. Its function is as follows. Cell wall protein that participates directly in adhesive cell-cell interactions during yeast flocculation, a reversible, asexual and Ca(2+)-dependent process in which cells adhere to form aggregates (flocs) consisting of thousands of cells. The lectin-like protein sticks out of the cell wall of flocculent cells and selectively binds mannose residues in the cell walls of adjacent cells. Activity is inhibited by mannose, but not by glucose, maltose, sucrose or galactose. The protein is Flocculation protein FLO5 (FLO5) of Saccharomyces cerevisiae (strain ATCC 204508 / S288c) (Baker's yeast).